The primary structure comprises 132 residues: MAGRGKTLGSGSAKKATTRSSKAGLQFPVGRIARFLKKGKYAERVGAGAPVYLAAVLEYLAAEVLELAGNAARDNKKTRIVPRHIQLAVRNDEELSKLLGDVTIANGGVMPNIHNLLLPKKTGASKPSAEDD.

The segment at 1-22 is disordered; sequence MAGRGKTLGSGSAKKATTRSSK.

It belongs to the histone H2A family. In terms of assembly, the nucleosome is a histone octamer containing two molecules each of H2A, H2B, H3 and H4 assembled in one H3-H4 heterotetramer and two H2A-H2B heterodimers. The octamer wraps approximately 147 bp of DNA. Not ubiquitinated. Low level of expression; mainly in roots. Found in the root cap cells and in non dividing tissues of the plant, including the root elongation and maturation zones and the leaf veins.

The protein resides in the nucleus. Its subcellular location is the chromosome. Core component of nucleosome. Nucleosomes wrap and compact DNA into chromatin, limiting DNA accessibility to the cellular machineries which require DNA as a template. Histones thereby play a central role in transcription regulation, DNA repair, DNA replication and chromosomal stability. DNA accessibility is regulated via a complex set of post-translational modifications of histones, also called histone code, and nucleosome remodeling. The sequence is that of Probable histone H2A.1 from Arabidopsis thaliana (Mouse-ear cress).